The sequence spans 229 residues: Prolactin (229 aa).

The signal sequence occupies residues 1–30 (MSNRGASLKGLFLAVLLVSNTLLTKEGVTS). 3 disulfides stabilise this stretch: Cys34-Cys41, Cys88-Cys204, and Cys221-Cys229.

It belongs to the somatotropin/prolactin family.

It localises to the secreted. The protein is Prolactin (PRL) of Gallus gallus (Chicken).